Here is a 351-residue protein sequence, read N- to C-terminus: Holliday junction branch migration complex subunit RuvB (351 aa).

The interval 4 to 185 (HDRELVSPEA…FGFVAHMDFY (182 aa)) is large ATPase domain (RuvB-L). ATP-binding positions include Leu24, Arg25, Gly66, Lys69, Thr70, Thr71, 132–134 (EDF), Arg175, Tyr185, and Arg222. Mg(2+) is bound at residue Thr70. The small ATPAse domain (RuvB-S) stretch occupies residues 186–256 (SPEELELILH…CARAALSLYE (71 aa)). The segment at 259 to 351 (DEGLDRLDRA…AALFDPDEEP (93 aa)) is head domain (RuvB-H). Residues Arg314 and Arg319 each coordinate DNA.

The protein belongs to the RuvB family. In terms of assembly, homohexamer. Forms an RuvA(8)-RuvB(12)-Holliday junction (HJ) complex. HJ DNA is sandwiched between 2 RuvA tetramers; dsDNA enters through RuvA and exits via RuvB. An RuvB hexamer assembles on each DNA strand where it exits the tetramer. Each RuvB hexamer is contacted by two RuvA subunits (via domain III) on 2 adjacent RuvB subunits; this complex drives branch migration. In the full resolvosome a probable DNA-RuvA(4)-RuvB(12)-RuvC(2) complex forms which resolves the HJ.

The protein localises to the cytoplasm. The catalysed reaction is ATP + H2O = ADP + phosphate + H(+). The RuvA-RuvB-RuvC complex processes Holliday junction (HJ) DNA during genetic recombination and DNA repair, while the RuvA-RuvB complex plays an important role in the rescue of blocked DNA replication forks via replication fork reversal (RFR). RuvA specifically binds to HJ cruciform DNA, conferring on it an open structure. The RuvB hexamer acts as an ATP-dependent pump, pulling dsDNA into and through the RuvAB complex. RuvB forms 2 homohexamers on either side of HJ DNA bound by 1 or 2 RuvA tetramers; 4 subunits per hexamer contact DNA at a time. Coordinated motions by a converter formed by DNA-disengaged RuvB subunits stimulates ATP hydrolysis and nucleotide exchange. Immobilization of the converter enables RuvB to convert the ATP-contained energy into a lever motion, pulling 2 nucleotides of DNA out of the RuvA tetramer per ATP hydrolyzed, thus driving DNA branch migration. The RuvB motors rotate together with the DNA substrate, which together with the progressing nucleotide cycle form the mechanistic basis for DNA recombination by continuous HJ branch migration. Branch migration allows RuvC to scan DNA until it finds its consensus sequence, where it cleaves and resolves cruciform DNA. This Thermobifida fusca (strain YX) protein is Holliday junction branch migration complex subunit RuvB.